The chain runs to 263 residues: Shikimate dehydrogenase (NADP(+)) (263 aa).

Residues 16 to 18 (SKS) and T65 contribute to the shikimate site. K69 acts as the Proton acceptor in catalysis. N90 and D105 together coordinate shikimate. NADP(+)-binding positions include 125–129 (GSGGS) and L208. Y210 is a shikimate binding site. NADP(+) is bound at residue G230.

This sequence belongs to the shikimate dehydrogenase family. Homodimer.

The catalysed reaction is shikimate + NADP(+) = 3-dehydroshikimate + NADPH + H(+). Its pathway is metabolic intermediate biosynthesis; chorismate biosynthesis; chorismate from D-erythrose 4-phosphate and phosphoenolpyruvate: step 4/7. Functionally, involved in the biosynthesis of the chorismate, which leads to the biosynthesis of aromatic amino acids. Catalyzes the reversible NADPH linked reduction of 3-dehydroshikimate (DHSA) to yield shikimate (SA). This Helicobacter pylori (strain G27) protein is Shikimate dehydrogenase (NADP(+)).